The primary structure comprises 446 residues: Probable D-serine dehydratase (446 aa).

N6-(pyridoxal phosphate)lysine is present on Lys-113.

The protein belongs to the serine/threonine dehydratase family. DsdA subfamily. Pyridoxal 5'-phosphate is required as a cofactor.

It catalyses the reaction D-serine = pyruvate + NH4(+). The protein is Probable D-serine dehydratase of Burkholderia lata (strain ATCC 17760 / DSM 23089 / LMG 22485 / NCIMB 9086 / R18194 / 383).